The sequence spans 363 residues: S-adenosylmethionine:tRNA ribosyltransferase-isomerase (363 aa).

The protein belongs to the QueA family. In terms of assembly, monomer.

The protein resides in the cytoplasm. The enzyme catalyses 7-aminomethyl-7-carbaguanosine(34) in tRNA + S-adenosyl-L-methionine = epoxyqueuosine(34) in tRNA + adenine + L-methionine + 2 H(+). The protein operates within tRNA modification; tRNA-queuosine biosynthesis. Functionally, transfers and isomerizes the ribose moiety from AdoMet to the 7-aminomethyl group of 7-deazaguanine (preQ1-tRNA) to give epoxyqueuosine (oQ-tRNA). The chain is S-adenosylmethionine:tRNA ribosyltransferase-isomerase from Haemophilus influenzae (strain 86-028NP).